Consider the following 134-residue polypeptide: Lymphocyte antigen 6S (134 aa).

The signal sequence occupies residues 1–26 (MSSLQAMKTLSLVLLVALLSMERAQG). The region spanning 28–76 (RCYRCLAVLEGASCSVVSCPFLDGVCVSQKVSVFGSKVRGENKLSLLSC) is the UPAR/Ly6 domain. 4 cysteine pairs are disulfide-bonded: C29–C53, C32–C41, C76–C98, and C99–C104. N105 is lipidated: GPI-anchor amidated asparagine. A propeptide spans 106 to 134 (AVVLAASSPWALCVQLLLSLGSVFLWALL) (removed in mature form).

Its subcellular location is the cell membrane. The sequence is that of Lymphocyte antigen 6S from Homo sapiens (Human).